The following is a 513-amino-acid chain: Probable lipid II flippase MurJ (513 aa).

The next 15 membrane-spanning stretches (helical) occupy residues 3–23 (ILKS…LGFM), 25–45 (DLLI…FLAF), 83–103 (FISN…AFGI), 133–153 (IMFP…ILNA), 162–182 (YSSI…TAYF), 186–206 (ILSL…YQFP), 221–241 (ILNL…LGMS), 245–265 (VSII…ISWI), 271–291 (LVEF…LPLL), 313–333 (LVCI…ESLI), 354–374 (IEFY…LAGF), 382–402 (TPMK…IFFI), 405–425 (FQYT…FFLL), 441–461 (WLRF…LLFI), and 481–501 (LFYI…CLGL).

The protein belongs to the MurJ/MviN family.

It is found in the cell inner membrane. Its pathway is cell wall biogenesis; peptidoglycan biosynthesis. In terms of biological role, involved in peptidoglycan biosynthesis. Transports lipid-linked peptidoglycan precursors from the inner to the outer leaflet of the cytoplasmic membrane. This is Probable lipid II flippase MurJ from Buchnera aphidicola subsp. Baizongia pistaciae (strain Bp).